A 437-amino-acid chain; its full sequence is Glycogen synthase (437 aa).

K15 serves as a coordination point for ADP-alpha-D-glucose.

This sequence belongs to the glycosyltransferase 1 family. Bacterial/plant glycogen synthase subfamily.

The catalysed reaction is [(1-&gt;4)-alpha-D-glucosyl](n) + ADP-alpha-D-glucose = [(1-&gt;4)-alpha-D-glucosyl](n+1) + ADP + H(+). The protein operates within glycan biosynthesis; glycogen biosynthesis. Functionally, synthesizes alpha-1,4-glucan chains using ADP-glucose. This chain is Glycogen synthase, found in Thermus thermophilus (strain ATCC BAA-163 / DSM 7039 / HB27).